Consider the following 494-residue polypeptide: Glycerol kinase (494 aa).

Threonine 13 lines the ADP pocket. ATP contacts are provided by threonine 13, threonine 14, and serine 15. Threonine 13 serves as a coordination point for sn-glycerol 3-phosphate. Arginine 17 is an ADP binding site. Arginine 83, glutamate 84, tyrosine 135, and aspartate 244 together coordinate sn-glycerol 3-phosphate. 5 residues coordinate glycerol: arginine 83, glutamate 84, tyrosine 135, aspartate 244, and glutamine 245. ADP-binding residues include threonine 266 and glycine 309. 4 residues coordinate ATP: threonine 266, glycine 309, glutamine 313, and glycine 410. Residues glycine 410 and asparagine 414 each contribute to the ADP site.

It belongs to the FGGY kinase family.

The enzyme catalyses glycerol + ATP = sn-glycerol 3-phosphate + ADP + H(+). Its pathway is polyol metabolism; glycerol degradation via glycerol kinase pathway; sn-glycerol 3-phosphate from glycerol: step 1/1. With respect to regulation, inhibited by fructose 1,6-bisphosphate (FBP). Its function is as follows. Key enzyme in the regulation of glycerol uptake and metabolism. Catalyzes the phosphorylation of glycerol to yield sn-glycerol 3-phosphate. The sequence is that of Glycerol kinase from Shewanella sp. (strain MR-4).